The chain runs to 85 residues: Large ribosomal subunit protein bL27 (85 aa).

A disordered region spans residues 1–24 (MAHKKGVGSSRNGRDSDGQRLGCK).

This sequence belongs to the bacterial ribosomal protein bL27 family.

The polypeptide is Large ribosomal subunit protein bL27 (Geotalea daltonii (strain DSM 22248 / JCM 15807 / FRC-32) (Geobacter daltonii)).